The sequence spans 381 residues: Transcription termination factor 4, mitochondrial (381 aa).

A mitochondrion-targeting transit peptide spans 1–42 (MAAFGRQVLDWHRLIPLTWACMARQTPHLGEQRRTTASLLRK). 5 MTERF repeats span residues 142-172 (CVVL…LGLG), 177-204 (KRVL…LKEK), 209-239 (VQQV…YAYF), 245-270 (HPDI…YLER), and 290-318 (LKDI…VFKK). Residues 310–327 (VEEFQVFKKLLAREEEES) form a dimerization with NSUN4 region. The disordered stretch occupies residues 322 to 381 (REEEESESSTSDDKRASLDEDEDDDDEEDNDEDDNDEDDDDEDDDEAEDNDEDEDDDEEE). Positions 340–381 (DEDEDDDDEEDNDEDDNDEDDDDEDDDEAEDNDEDEDDDEEE) are enriched in acidic residues.

Belongs to the mTERF family. Heterodimer with NSUN4; this interaction may be required for NSUN4 recruitment to the mitochondrial large ribosomal subunit. Post-translationally, the mature mitochondrial protein exists in 2 forms differing at the level of their N-terminus, one is starting at residue 43 and the other at residue 48.

Its subcellular location is the mitochondrion. Functionally, regulator of mitochondrial ribosome biogenesis and translation. Binds to mitochondrial ribosomal RNAs 16S, 12S and 7S and targets NSUN4 RNA methyltransferase to the mitochondrial large ribosomal subunit (39S). The sequence is that of Transcription termination factor 4, mitochondrial (MTERF4) from Homo sapiens (Human).